A 396-amino-acid polypeptide reads, in one-letter code: Elongation factor Tu (396 aa).

The 196-residue stretch at 10 to 205 (KPHVNIGTIG…ACDDNIPDPV (196 aa)) folds into the tr-type G domain. Residues 19–26 (GHVDHGKT) are G1. 19–26 (GHVDHGKT) is a GTP binding site. Residue Thr26 coordinates Mg(2+). The G2 stretch occupies residues 62-66 (GITIN). The G3 stretch occupies residues 83 to 86 (DAPG). GTP is bound by residues 83–87 (DAPGH) and 138–141 (NKCD). A G4 region spans residues 138–141 (NKCD). The G5 stretch occupies residues 175–177 (SAL).

Belongs to the TRAFAC class translation factor GTPase superfamily. Classic translation factor GTPase family. EF-Tu/EF-1A subfamily. In terms of assembly, monomer.

The protein resides in the cytoplasm. It carries out the reaction GTP + H2O = GDP + phosphate + H(+). Functionally, GTP hydrolase that promotes the GTP-dependent binding of aminoacyl-tRNA to the A-site of ribosomes during protein biosynthesis. The protein is Elongation factor Tu of Corynebacterium glutamicum (strain ATCC 13032 / DSM 20300 / JCM 1318 / BCRC 11384 / CCUG 27702 / LMG 3730 / NBRC 12168 / NCIMB 10025 / NRRL B-2784 / 534).